The primary structure comprises 130 residues: Small ribosomal subunit protein uS8 (130 aa).

The protein belongs to the universal ribosomal protein uS8 family. In terms of assembly, part of the 30S ribosomal subunit. Contacts proteins S5 and S12.

Functionally, one of the primary rRNA binding proteins, it binds directly to 16S rRNA central domain where it helps coordinate assembly of the platform of the 30S subunit. The protein is Small ribosomal subunit protein uS8 of Mannheimia succiniciproducens (strain KCTC 0769BP / MBEL55E).